A 170-amino-acid chain; its full sequence is Probable Brix domain-containing ribosomal biogenesis protein (170 aa).

The Brix domain occupies 6 to 170; it reads TRIVITSSRD…IKFLKMILEA (165 aa).

Probably involved in the biogenesis of the ribosome. This is Probable Brix domain-containing ribosomal biogenesis protein from Saccharolobus solfataricus (strain ATCC 35092 / DSM 1617 / JCM 11322 / P2) (Sulfolobus solfataricus).